Consider the following 89-residue polypeptide: Small ribosomal subunit protein uS15 (89 aa).

A compositionally biased stretch (basic and acidic residues) spans 1–16; that stretch reads MSVADIKKQDIVKDNG. The segment at 1 to 24 is disordered; it reads MSVADIKKQDIVKDNGRSANDTGS.

It belongs to the universal ribosomal protein uS15 family. As to quaternary structure, part of the 30S ribosomal subunit. Forms a bridge to the 50S subunit in the 70S ribosome, contacting the 23S rRNA.

Functionally, one of the primary rRNA binding proteins, it binds directly to 16S rRNA where it helps nucleate assembly of the platform of the 30S subunit by binding and bridging several RNA helices of the 16S rRNA. Its function is as follows. Forms an intersubunit bridge (bridge B4) with the 23S rRNA of the 50S subunit in the ribosome. The protein is Small ribosomal subunit protein uS15 of Ralstonia pickettii (strain 12J).